A 229-amino-acid polypeptide reads, in one-letter code: Aspartate-rich protein 1 (229 aa).

The segment at 84-106 is disordered; sequence SEEDNDDAKILPSPVQGSSEDNL.

This chain is Aspartate-rich protein 1 (DRICH1), found in Homo sapiens (Human).